The following is a 196-amino-acid chain: Thymidine kinase (196 aa).

Residue 17–24 (GPMFAGKT) coordinates ATP. Glu92 acts as the Proton acceptor in catalysis. Residue Phe121 participates in substrate binding. Positions 146 and 149 each coordinate Zn(2+). 166–170 (LILAG) is a substrate binding site. The Zn(2+) site is built by Cys179 and Cys182.

This sequence belongs to the thymidine kinase family.

The catalysed reaction is thymidine + ATP = dTMP + ADP + H(+). Functionally, phosphorylates thymidine. ASFV replicates in the cytoplasm of infected cells and contains genes encoding a number of enzymes needed for DNA synthesis, including thymidine kinase. Important for growth in swine macrophages in vitro and is a virus virulence factor in swine. This is Thymidine kinase from African swine fever virus (strain Badajoz 1971 Vero-adapted) (Ba71V).